The sequence spans 456 residues: Tyrosinase-like protein 2 (456 aa).

The signal sequence occupies residues 1–22 (MNTMALFGKVILLQFLIGVGFC). Cu cation contacts are provided by His-145, His-154, His-163, His-295, His-299, and His-322.

Cu(2+) is required as a cofactor. As to expression, prismatic layer of shell (at protein level).

Its subcellular location is the secreted. The sequence is that of Tyrosinase-like protein 2 from Margaritifera margaritifera (Freshwater pearl mussel).